Reading from the N-terminus, the 780-residue chain is Translation initiation factor IF-2 (780 aa).

The tract at residues Arg44–Glu194 is disordered. Over residues Thr53–Thr65 the composition is skewed to basic and acidic residues. Positions Ser66 to Thr81 are enriched in polar residues. Composition is skewed to low complexity over residues Asn82 to Pro93 and Ala117 to Gly168. One can recognise a tr-type G domain in the interval Glu281 to Lys450. The segment at Gly290–Thr297 is G1. Position 290-297 (Gly290–Thr297) interacts with GTP. Residues Gly315–His319 are G2. The interval Asp336–Gly339 is G3. GTP is bound by residues Asp336 to His340 and Asn390 to Asp393. The interval Asn390–Asp393 is G4. The segment at Ser426 to Lys428 is G5.

It belongs to the TRAFAC class translation factor GTPase superfamily. Classic translation factor GTPase family. IF-2 subfamily.

Its subcellular location is the cytoplasm. One of the essential components for the initiation of protein synthesis. Protects formylmethionyl-tRNA from spontaneous hydrolysis and promotes its binding to the 30S ribosomal subunits. Also involved in the hydrolysis of GTP during the formation of the 70S ribosomal complex. This is Translation initiation factor IF-2 from Listeria welshimeri serovar 6b (strain ATCC 35897 / DSM 20650 / CCUG 15529 / CIP 8149 / NCTC 11857 / SLCC 5334 / V8).